We begin with the raw amino-acid sequence, 244 residues long: Small ribosomal subunit protein uS2 (244 aa).

A disordered region spans residues 224–244 (GQQGSDEAEEAEEAAEEVVAE). Residues 229–244 (DEAEEAEEAAEEVVAE) show a composition bias toward acidic residues.

It belongs to the universal ribosomal protein uS2 family.

The sequence is that of Small ribosomal subunit protein uS2 from Desulfitobacterium hafniense (strain DSM 10664 / DCB-2).